A 126-amino-acid chain; its full sequence is Small ribosomal subunit protein uS13 (126 aa).

Residues 94–126 (RGLPVHGQRTSTNARTRKGPRRAIAGKKKPGKK) form a disordered region. Basic residues predominate over residues 108–126 (RTRKGPRRAIAGKKKPGKK).

It belongs to the universal ribosomal protein uS13 family. As to quaternary structure, part of the 30S ribosomal subunit. Forms a loose heterodimer with protein S19. Forms two bridges to the 50S subunit in the 70S ribosome.

Its function is as follows. Located at the top of the head of the 30S subunit, it contacts several helices of the 16S rRNA. In the 70S ribosome it contacts the 23S rRNA (bridge B1a) and protein L5 of the 50S subunit (bridge B1b), connecting the 2 subunits; these bridges are implicated in subunit movement. Contacts the tRNAs in the A and P-sites. The chain is Small ribosomal subunit protein uS13 from Streptomyces avermitilis (strain ATCC 31267 / DSM 46492 / JCM 5070 / NBRC 14893 / NCIMB 12804 / NRRL 8165 / MA-4680).